Here is a 430-residue protein sequence, read N- to C-terminus: Probable protein phosphatase 1N (430 aa).

Residues 16–65 (CKKKEREKEGREEEEEEEAGRRAPEGPRSLLTAPRRAQRPHGGAEASGGL) are disordered. Basic and acidic residues predominate over residues 17–26 (KKKEREKEGR). Positions 66–326 (RFGASAAQGW…DNMTCILVCF (261 aa)) constitute a PPM-type phosphatase domain. Mn(2+)-binding residues include D103, G104, D274, and D317. Positions 407–430 (GEKGQDGAGKSNPTHLGSALDMEA) are disordered.

This sequence belongs to the PP2C family. It depends on Mg(2+) as a cofactor. Requires Mn(2+) as cofactor.

The enzyme catalyses O-phospho-L-seryl-[protein] + H2O = L-seryl-[protein] + phosphate. It carries out the reaction O-phospho-L-threonyl-[protein] + H2O = L-threonyl-[protein] + phosphate. The protein is Probable protein phosphatase 1N (PPM1N) of Homo sapiens (Human).